Reading from the N-terminus, the 714-residue chain is RB-associated KRAB zinc finger protein (714 aa).

Residues 8–79 (VSFKDVAVDF…GGEFPCQHSP (72 aa)) form the KRAB domain. Residues Lys-97 and Lys-259 each participate in a glycyl lysine isopeptide (Lys-Gly) (interchain with G-Cter in SUMO2) cross-link. The tract at residues 171–260 (TYHGEKMCEF…YQRSQMEMKP (90 aa)) is required for interaction with RB1. C2H2-type zinc fingers lie at residues 261-283 (FECS…QRAH) and 289-311 (YECN…RRSH). A Glycyl lysine isopeptide (Lys-Gly) (interchain with G-Cter in SUMO2) cross-link involves residue Lys-315. 7 consecutive C2H2-type zinc fingers follow at residues 317-339 (YKCN…LRTH), 345-367 (YECS…QRNH), 373-395 (YPCN…QRTH), 401-423 (YKCN…QRTH), 429-451 (YQCS…YRSH), 457-479 (YECN…RKVH), and 485-505 (HECS…HTAH). Lys-357 participates in a covalent cross-link: Glycyl lysine isopeptide (Lys-Gly) (interchain with G-Cter in SUMO2). The tract at residues 417–714 (ITHQRTHTGE…NMNVLDVENL (298 aa)) is interaction with AR. The segment at 511 to 533 (YECNECGKTFLVNSAFDGHQPLP) adopts a C2H2-type 10; degenerate zinc-finger fold. Glycyl lysine isopeptide (Lys-Gly) (interchain with G-Cter in SUMO2) cross-links involve residues Lys-534 and Lys-537. 6 consecutive C2H2-type zinc fingers follow at residues 539-561 (YECN…YRSH), 567-589 (YGCS…QRVH), 595-617 (YECY…HRIH), 623-645 (YECS…YRSH), 651-673 (YECN…YRTH), and 679-701 (YECN…QRIH).

Belongs to the krueppel C2H2-type zinc-finger protein family. In terms of assembly, interacts with AR and RB1. May also interact with other nuclear hormone receptors such as NR3C1/GR. As to expression, expressed in bone, brain, heart, kidney, liver, lung, pancreas and placenta.

The protein resides in the nucleus. Functionally, may repress E2F-dependent transcription. May promote AR-dependent transcription. This chain is RB-associated KRAB zinc finger protein (RBAK), found in Homo sapiens (Human).